A 327-amino-acid polypeptide reads, in one-letter code: 2-keto-3-deoxygluconate permease (327 aa).

10 helical membrane passes run 10–30 (IPGG…TFSP), 42–62 (GMIT…GASI), 73–93 (KSGT…AIAS), 95–115 (IIPE…LALV), 139–159 (AGAF…IILG), 163–183 (IASF…VGFA), 199–219 (VQTL…LTVI), 224–244 (LLGI…LIIA), 254–274 (TAGI…VLIA), and 289–309 (SLVA…TSIW).

Belongs to the KdgT transporter family.

It is found in the cell inner membrane. It carries out the reaction 2-dehydro-3-deoxy-D-gluconate(in) + H(+)(in) = 2-dehydro-3-deoxy-D-gluconate(out) + H(+)(out). Catalyzes the proton-dependent uptake of 2-keto-3-deoxygluconate (KDG) into the cell. This chain is 2-keto-3-deoxygluconate permease, found in Escherichia coli O127:H6 (strain E2348/69 / EPEC).